The chain runs to 255 residues: NAD kinase (255 aa).

Asp44 (proton acceptor) is an active-site residue. NAD(+) is bound by residues 44 to 45 (DG), His49, 114 to 115 (NE), Asp144, Ala152, 155 to 160 (SAYNLS), and Gln216.

It belongs to the NAD kinase family. It depends on a divalent metal cation as a cofactor.

It localises to the cytoplasm. The catalysed reaction is NAD(+) + ATP = ADP + NADP(+) + H(+). Its function is as follows. Involved in the regulation of the intracellular balance of NAD and NADP, and is a key enzyme in the biosynthesis of NADP. Catalyzes specifically the phosphorylation on 2'-hydroxyl of the adenosine moiety of NAD to yield NADP. The sequence is that of NAD kinase from Rickettsia africae (strain ESF-5).